We begin with the raw amino-acid sequence, 375 residues long: MGKRDYYEILGIDKSASQDEIKKNYRKLARKYHPDVNKEADAAEKFKEVKEAYEVLSDDQKRAQYDQFGHSGPQSQGFGGFGGGAQDFGGFGDIFDMFFGGGGRSRDPNAPQQGNDLQYTMILDFEEAVFGKETDIEIPKEESCDTCNGSGAKPGTKPETCSHCHGSGQLNQEQNTPFGRVVNRRVCNYCQGTGKIIPDKCNTCGGSGTVQKNKKIHISIPAGIDEGQQIRVAGKGESGKNGGPAGDLFVVIKVRPHDFFVREGDHIFCELPLTYAQAALGDELEVPTVHGKVKVKVPAGTQTGKTFRIKGKGAPNVRGRGHGDQHIKIKVMTPTNLSEKQKDLLREFNELGGNESTDEQDDNIFQRFRRAFKGE.

In terms of domain architecture, J spans 5–69 (DYYEILGIDK…QKRAQYDQFG (65 aa)). The CR-type zinc-finger motif lies at 131–213 (GKETDIEIPK…CGGSGTVQKN (83 aa)). Residues C144, C147, C161, C164, C187, C190, C201, and C204 each contribute to the Zn(2+) site. CXXCXGXG motif repeat units follow at residues 144–151 (CDTCNGSG), 161–168 (CSHCHGSG), 187–194 (CNYCQGTG), and 201–208 (CNTCGGSG).

This sequence belongs to the DnaJ family. In terms of assembly, homodimer. It depends on Zn(2+) as a cofactor.

It is found in the cytoplasm. Functionally, participates actively in the response to hyperosmotic and heat shock by preventing the aggregation of stress-denatured proteins and by disaggregating proteins, also in an autonomous, DnaK-independent fashion. Unfolded proteins bind initially to DnaJ; upon interaction with the DnaJ-bound protein, DnaK hydrolyzes its bound ATP, resulting in the formation of a stable complex. GrpE releases ADP from DnaK; ATP binding to DnaK triggers the release of the substrate protein, thus completing the reaction cycle. Several rounds of ATP-dependent interactions between DnaJ, DnaK and GrpE are required for fully efficient folding. Also involved, together with DnaK and GrpE, in the DNA replication of plasmids through activation of initiation proteins. This is Chaperone protein DnaJ from Oceanobacillus iheyensis (strain DSM 14371 / CIP 107618 / JCM 11309 / KCTC 3954 / HTE831).